The primary structure comprises 624 residues: Chaperone protein HtpG (624 aa).

Residues 1 to 336 (MKGQETRGFQ…SSDLPLNVSR (336 aa)) are a; substrate-binding. The interval 337 to 552 (EILQDSTVTR…ADEMSTQMAK (216 aa)) is b. The segment at 553–624 (LFAAAGQKVP…IRRMNQLLVS (72 aa)) is c.

This sequence belongs to the heat shock protein 90 family. In terms of assembly, homodimer.

Its subcellular location is the cytoplasm. In terms of biological role, molecular chaperone. Has ATPase activity. This chain is Chaperone protein HtpG, found in Escherichia coli O1:K1 / APEC.